The primary structure comprises 299 residues: Non-structural protein NS-S (299 aa).

The involved in inclusion bodies formation stretch occupies residues proline 66–proline 69. The tract at residues phenylalanine 148–alanine 220 is interaction with host TNIP2.

It belongs to the Bandavirus NS-S protein family. In terms of assembly, interacts with host TBK1; this interaction antagonizes TBK1 phosphorylation and inhibits TBK1-IRF3 interaction. Interacts with host STAT2; this interaction blocks the nuclear translocation and activation of host STAT2. Interacts with host TNIP2.

The protein resides in the host cytoplasm. Its function is as follows. Plays a role in the inhibition of host RLR-induced interferon-beta activation by inhibiting the phosphorylation of TANK-binding kinase 1/TBK1, thereby blocking IRF3 activation and preventing the establishment of an antiviral state. Also blocks IFN-triggered nuclear translocation and activation of host STAT2. The chain is Non-structural protein NS-S (NSS) from Alces americanus (American moose).